Consider the following 417-residue polypeptide: Spermidine/putrescine import ATP-binding protein PotA (417 aa).

Residues 5-308 form the ABC transporter domain; the sequence is IILKDLTKVF…PANRFVAQFV (304 aa). Residue 37-44 coordinates ATP; the sequence is GPSGCGKT. An insert region spans residues 105–177; that stretch reads DFNSKIKANL…TALKCKKINK (73 aa).

Belongs to the ABC transporter superfamily. Spermidine/putrescine importer (TC 3.A.1.11.1) family. In terms of assembly, the complex is composed of two ATP-binding proteins (PotA), two transmembrane proteins (PotB and PotC) and a solute-binding protein (PotD).

The protein localises to the cell membrane. It carries out the reaction ATP + H2O + polyamine-[polyamine-binding protein]Side 1 = ADP + phosphate + polyamineSide 2 + [polyamine-binding protein]Side 1.. Its function is as follows. Part of the ABC transporter complex PotABCD involved in spermidine/putrescine import. Responsible for energy coupling to the transport system. The sequence is that of Spermidine/putrescine import ATP-binding protein PotA from Onion yellows phytoplasma (strain OY-M).